A 171-amino-acid chain; its full sequence is AP-3 complex subunit sigma (171 aa).

Belongs to the adaptor complexes small subunit family. As to quaternary structure, adaptor protein complex 3 (AP-3) is a heterotetramer composed of two large adaptins (delta-type subunit and beta-type subunit), a medium adaptin (mu-type subunit) and a small adaptin (sigma-type subunit).

The protein localises to the endosome membrane. Functionally, part of the AP-3 complex, an adaptor-related complex which is essential for the compartmentalization of the endocytic pathway. The protein is AP-3 complex subunit sigma (ap3s1) of Dictyostelium discoideum (Social amoeba).